A 151-amino-acid polypeptide reads, in one-letter code: Ribosome maturation factor RimP (151 aa).

It belongs to the RimP family.

The protein localises to the cytoplasm. In terms of biological role, required for maturation of 30S ribosomal subunits. The protein is Ribosome maturation factor RimP of Aliivibrio fischeri (strain MJ11) (Vibrio fischeri).